The chain runs to 179 residues: MELQGAQEDLGISLSSPRRNHETRPGSKAKGRSSICLQASVWMAGGKLRLRASEHLTQGHQQELRDWNLGEDASLLFSKSPFGAGKLIQAPAHVFRQCWVQGNAWISCITKFDSKRSPEVASSPSYLTVPRRSPLPVFLRPSDRCVCGGCYLGKSTRRRACQSLLSDPLGVTFPTQTRP.

A disordered region spans residues 1–32; it reads MELQGAQEDLGISLSSPRRNHETRPGSKAKGR.

This is an uncharacterized protein from Homo sapiens (Human).